The sequence spans 163 residues: ADP-ribosylation factor-like protein 2-binding protein (163 aa).

It belongs to the ARL2BP family. As to quaternary structure, interacts with GTP bound ARL2 and ARL3; the complex ARL2-ARL2BP as well as ARL2BP alone, binds to SLC25A4/ANT1. Interaction with ARL2 may be required for cilia basal body localization. Interacts with STAT3; interaction is enhanced with ARL2. Found in a complex with ARL2BP, ARL2 and SLC25A6. Found in a complex with ARL2, ARL2BP and SLC25A4. Interacts with STAT2, STAT3 and STAT4.

Its subcellular location is the cytoplasm. The protein resides in the mitochondrion intermembrane space. It localises to the cytoskeleton. The protein localises to the microtubule organizing center. It is found in the centrosome. Its subcellular location is the nucleus. The protein resides in the spindle. It localises to the cilium basal body. Functionally, together with ARL2, plays a role in the nuclear translocation, retention and transcriptional activity of STAT3. May play a role as an effector of ARL2. In Pongo abelii (Sumatran orangutan), this protein is ADP-ribosylation factor-like protein 2-binding protein (ARL2BP).